Here is a 251-residue protein sequence, read N- to C-terminus: Flap endonuclease Xni (251 aa).

D104 provides a ligand contact to Mg(2+). Residues 160–249 form the 5'-3' exonuclease domain; the sequence is VQPQQLPDYW…IDGNLQQLRL (90 aa). K(+)-binding residues include L171, A172, P180, V182, and I185. The interval 184-189 is interaction with DNA; sequence GIGPKS.

The protein belongs to the Xni family. Mg(2+) is required as a cofactor. K(+) serves as cofactor.

Functionally, has flap endonuclease activity. During DNA replication, flap endonucleases cleave the 5'-overhanging flap structure that is generated by displacement synthesis when DNA polymerase encounters the 5'-end of a downstream Okazaki fragment. The chain is Flap endonuclease Xni from Escherichia coli O139:H28 (strain E24377A / ETEC).